The chain runs to 138 residues: Flagellar assembly factor FliW (138 aa).

It belongs to the FliW family. In terms of assembly, interacts with translational regulator CsrA and flagellin(s).

The protein localises to the cytoplasm. Its function is as follows. Acts as an anti-CsrA protein, binds CsrA and prevents it from repressing translation of its target genes, one of which is flagellin. Binds to flagellin and participates in the assembly of the flagellum. The protein is Flagellar assembly factor FliW of Symbiobacterium thermophilum (strain DSM 24528 / JCM 14929 / IAM 14863 / T).